The sequence spans 281 residues: Para-Rep C1 (281 aa).

The 95-residue stretch at 3–97 (TLQGTFWCFT…VAGPWTYGEL (95 aa)) folds into the CRESS-DNA virus Rep endonuclease domain. The RCR-1 signature appears at 10–13 (CFTL). Positions 36 and 42 each coordinate a divalent metal cation. Positions 42–44 (HLQ) match the RCR-2 motif. The short motif at 51–71 (KRSTLKMMKELLPGAHLEVSK) is the Nuclear localization signal element. Catalysis depends on Tyr-80, which acts as the For DNA cleavage activity. Positions 80–83 (YAMK) match the RCR-3 motif. Glu-85 contacts a divalent metal cation. A Nuclear localization signal motif is present at residues 97–103 (LLKKGSN). 173-181 (GPQGGEGKT) is an ATP binding site.

Belongs to the nanoviridea/circoviridae replication-associated protein family. As to quaternary structure, homooligomer (Potential). Rep binds to repeated DNA motifs (iterons). Mg(2+) serves as cofactor. The cofactor is Mn(2+).

It localises to the host nucleus. The enzyme catalyses ATP + H2O = ADP + phosphate + H(+). In terms of biological role, initiates and terminates the replication only of its own subviral DNA molecule. The closed circular ssDNA genome is first converted to a superhelical dsDNA. Rep binds a specific hairpin at the genome origin of replication. Introduces an endonucleolytic nick within the intergenic region of the genome, thereby initiating the rolling circle replication (RCR). Following cleavage, binds covalently to the 5'-phosphate of DNA as a tyrosyl ester. The cleavage gives rise to a free 3'-OH that serves as a primer for the cellular DNA polymerase. The polymerase synthesizes the (+) strand DNA by rolling circle mechanism. After one round of replication, a Rep-catalyzed nucleotidyl transfer reaction releases a circular single-stranded virus genome, thereby terminating the replication. Displays origin-specific DNA cleavage, nucleotidyl transferase, ATPase and helicase activities. In Milk vetch dwarf C1 alphasatellite (MVDC1A), this protein is Para-Rep C1 (C1).